A 508-amino-acid polypeptide reads, in one-letter code: Photosystem II CP47 reaction center protein (508 aa).

Transmembrane regions (helical) follow at residues Ser21–Ser36, Ile101–Trp115, Gly140–Phe156, Ile203–Ser218, Val237–Val252, and Ser457–Arg472.

It belongs to the PsbB/PsbC family. PsbB subfamily. In terms of assembly, PSII is composed of 1 copy each of membrane proteins PsbA, PsbB, PsbC, PsbD, PsbE, PsbF, PsbH, PsbI, PsbJ, PsbK, PsbL, PsbM, PsbT, PsbX, PsbY, PsbZ, Psb30/Ycf12, at least 3 peripheral proteins of the oxygen-evolving complex and a large number of cofactors. It forms dimeric complexes. Binds multiple chlorophylls. PSII binds additional chlorophylls, carotenoids and specific lipids. serves as cofactor.

The protein localises to the plastid. It localises to the chloroplast thylakoid membrane. Its function is as follows. One of the components of the core complex of photosystem II (PSII). It binds chlorophyll and helps catalyze the primary light-induced photochemical processes of PSII. PSII is a light-driven water:plastoquinone oxidoreductase, using light energy to abstract electrons from H(2)O, generating O(2) and a proton gradient subsequently used for ATP formation. The polypeptide is Photosystem II CP47 reaction center protein (Guizotia abyssinica (Niger)).